We begin with the raw amino-acid sequence, 715 residues long: Fatty acid oxidation complex subunit alpha (715 aa).

Residues 1-190 are enoyl-CoA hydratase; that stretch reads MDMTSAFTLN…RVGLVDEVVP (190 aa). The tract at residues 306–715 is 3-hydroxyacyl-CoA dehydrogenase; that stretch reads GPLASVGVLG…WNSGETDLKE (410 aa).

In the N-terminal section; belongs to the enoyl-CoA hydratase/isomerase family. It in the central section; belongs to the 3-hydroxyacyl-CoA dehydrogenase family. In terms of assembly, heterotetramer of two alpha chains (FadJ) and two beta chains (FadI).

The protein localises to the cytoplasm. The catalysed reaction is a (3S)-3-hydroxyacyl-CoA = a (2E)-enoyl-CoA + H2O. It catalyses the reaction a 4-saturated-(3S)-3-hydroxyacyl-CoA = a (3E)-enoyl-CoA + H2O. The enzyme catalyses a (3S)-3-hydroxyacyl-CoA + NAD(+) = a 3-oxoacyl-CoA + NADH + H(+). It carries out the reaction (3S)-3-hydroxybutanoyl-CoA = (3R)-3-hydroxybutanoyl-CoA. It functions in the pathway lipid metabolism; fatty acid beta-oxidation. Functionally, catalyzes the formation of a hydroxyacyl-CoA by addition of water on enoyl-CoA. Also exhibits 3-hydroxyacyl-CoA epimerase and 3-hydroxyacyl-CoA dehydrogenase activities. This Citrobacter koseri (strain ATCC BAA-895 / CDC 4225-83 / SGSC4696) protein is Fatty acid oxidation complex subunit alpha.